The sequence spans 631 residues: UvrABC system protein C (631 aa).

A disordered region spans residues 1-20 (MKNETEAVADQPPKTGPVKP). A GIY-YIG domain is found at 34-112 (MSPGVYRMLD…IKQLKPKFNV (79 aa)). Residues 222-257 (TDLQRQLADGMAAASEAMEFERAAALRDRIRALTNV) enclose the UVR domain.

This sequence belongs to the UvrC family. As to quaternary structure, interacts with UvrB in an incision complex.

Its subcellular location is the cytoplasm. In terms of biological role, the UvrABC repair system catalyzes the recognition and processing of DNA lesions. UvrC both incises the 5' and 3' sides of the lesion. The N-terminal half is responsible for the 3' incision and the C-terminal half is responsible for the 5' incision. The protein is UvrABC system protein C of Jannaschia sp. (strain CCS1).